Here is a 267-residue protein sequence, read N- to C-terminus: Acetyl-coenzyme A carboxylase carboxyl transferase subunit beta, chloroplastic (267 aa).

Residues 12 to 267 (LWKKCDSCNI…TIHMILDLHN (256 aa)) form the CoA carboxyltransferase N-terminal domain. Positions 16, 19, 35, and 38 each coordinate Zn(2+). The segment at 16-38 (CDSCNILISKFDFYKHDKVCPEC) adopts a C4-type zinc-finger fold.

It belongs to the AccD/PCCB family. Acetyl-CoA carboxylase is a heterohexamer composed of biotin carboxyl carrier protein, biotin carboxylase and 2 subunits each of ACCase subunit alpha and ACCase plastid-coded subunit beta (accD). The cofactor is Zn(2+).

Its subcellular location is the plastid. The protein resides in the chloroplast stroma. The enzyme catalyses N(6)-carboxybiotinyl-L-lysyl-[protein] + acetyl-CoA = N(6)-biotinyl-L-lysyl-[protein] + malonyl-CoA. Its pathway is lipid metabolism; malonyl-CoA biosynthesis; malonyl-CoA from acetyl-CoA: step 1/1. Functionally, component of the acetyl coenzyme A carboxylase (ACC) complex. Biotin carboxylase (BC) catalyzes the carboxylation of biotin on its carrier protein (BCCP) and then the CO(2) group is transferred by the transcarboxylase to acetyl-CoA to form malonyl-CoA. The polypeptide is Acetyl-coenzyme A carboxylase carboxyl transferase subunit beta, chloroplastic (Cyanidium caldarium (Red alga)).